A 423-amino-acid chain; its full sequence is Sorting nexin-4 (423 aa).

Basic and acidic residues predominate over residues 1–21; it reads MTDKGKNDLTSKAKDKARGNP. Positions 1–25 are disordered; it reads MTDKGKNDLTSKAKDKARGNPEKPP. Positions 29–157 constitute a PX domain; sequence EIIVSDPQKR…TFLVSKDWES (129 aa). A 1,2-diacyl-sn-glycero-3-phospho-(1D-myo-inositol-3-phosphate)-binding residues include arginine 78, serine 80, lysine 104, and arginine 123. Coiled coils occupy residues 217–252 and 346–381; these read KKND…AKLK and SRRE…ECLK.

Belongs to the sorting nexin family. Forms a complex with ATG20 and ATG17. Binds also to SNC1 and SNX41.

Its subcellular location is the cytoplasm. The protein resides in the cytosol. It localises to the preautophagosomal structure membrane. The protein localises to the endosome membrane. In terms of biological role, sorting nexin, involved in the separation or division of vacuoles throughout the entire life cycle of the cells. Involved in retrieval of late-Golgi SNAREs from post-Golgi endosomes to the trans-Golgi network, for cytoplasm to vacuole transport (Cvt), and autophagy of large cargos including mitophagy, pexophagy and glycophagy. Involved in proper sorting of the v-SNARE protein SNC1. The sequence is that of Sorting nexin-4 from Saccharomyces cerevisiae (strain ATCC 204508 / S288c) (Baker's yeast).